We begin with the raw amino-acid sequence, 640 residues long: Calpain-5 (640 aa).

The Calpain catalytic domain occupies 26–343 (LFEDPHFPAS…FTDIIKCRLI (318 aa)). Catalysis depends on residues cysteine 81, histidine 252, and asparagine 284. The tract at residues 344 to 496 (NTSYLSIHKT…VFTDVPSNCR (153 aa)) is domain III. The 119-residue stretch at 499–617 (RLDEPPRTCW…HSLHLQDRSG (119 aa)) folds into the C2 domain.

The protein belongs to the peptidase C2 family.

In terms of biological role, calcium-regulated non-lysosomal thiol-protease. This Rattus norvegicus (Rat) protein is Calpain-5 (Capn5).